A 497-amino-acid chain; its full sequence is COP9 signalosome complex subunit 6 (497 aa).

The region spanning 21-162 (VALHPLPILE…LTIYESNLEI (142 aa)) is the MPN domain. Disordered stretches follow at residues 230 to 282 (ATED…KNRD), 324 to 350 (YLSSGDASSQQQQQQQQQQQTEGLDQP), and 435 to 497 (AKNS…RFDH). The segment covering 236–246 (SDKPLMKKVVD) has biased composition (basic and acidic residues). 2 stretches are compositionally biased toward low complexity: residues 258–272 (SDDAAAEAPTTSSAA) and 333–343 (QQQQQQQQQQQ). Over residues 440–453 (RREQASHGGGERFN) the composition is skewed to basic and acidic residues. Residues 475–488 (VGEGSASGSGGSGP) are compositionally biased toward gly residues.

This sequence belongs to the peptidase M67A family. CSN6 subfamily. As to quaternary structure, component of the COP9 signalosome (CSN) complex.

It localises to the cytoplasm. The protein resides in the nucleus. In terms of biological role, component of the COP9 signalosome (CSN) complex that acts as an regulator of the ubiquitin (Ubl) conjugation pathway by mediating the deneddylation of the cullin subunit of SCF-type E3 ubiquitin-protein ligase complexes. The CSN complex is involved in the regulation of the circadian clock through its control of the stability of the SCF(FWD1) complex. This is COP9 signalosome complex subunit 6 (csn-6) from Neurospora crassa (strain ATCC 24698 / 74-OR23-1A / CBS 708.71 / DSM 1257 / FGSC 987).